A 1401-amino-acid chain; its full sequence is MASCASIDIEDATQHLRDILKLDRPAGGPSAESPRPSSAYNGDLNGLLVPDPLCSGDSTSANKTGLRTMPPINLQEKQVICLSGDDSSTCIGILAKEVEIVASSDSSISSKARGSNKVKIQPVAKYDWEQKYYYGNLIAVSNSFLAYAIRAANNGSAMVRVISVSTSERTLLKGFTGSVADLAFAHLNSPQLACLDEAGNLFVWRLALVNGKIQEEILVHIRQPEGTPLNHFRRIIWCPFIPEESEDCCEESSPTVALLHEDRAEVWDLDMLRSSHSTWPVDVSQIKQGFIVVKGHSTCLSEGALSPDGTVLATASHDGYVKFWQIYIEGQDEPRCLHEWKPHDGRPLSCLLFCDNHKKQDPDVPFWRFLITGADQNRELKMWCTVSWTCLQTIRFSPDIFSSVSVPPSLKVCLDLSAEYLILSDVQRKVLYVMELLQNQEEGHACFSSISEFLLTHPVLSFGIQVVSRCRLRHTEVLPAEEENDSLGADGTHGAGAMESAAGVLIKLFCVHTKALQDVQIRFQPQLNPDVVAPLPTHTAHEDFTFGESRPELGSEGLGSAAHGSQPDLRRIVELPAPADFLSLSSETKPKLMTPDAFMTPSASLQQITASPSSSSSGSSSSSSSSSSSLTAVSAMSSTSAVDPSLTRPPEELTLSPKLQLDGSLTMSSSGSLQASPRGLLPGLLPAPADKLTPKGPGQVPTATSALSLELQEVEPLGLPQASPSRTRSPDVISSASTALSQDIPEIASEALSRGFGSSAPEGLEPDSMASAASALHLLSPRPRPGPELGPQLGLDGGPGDGDRHNTPSLLEAALTQEASTPDSQVWPTAPDITRETCSTLAESPRNGLQEKHKSLAFHRPPYHLLQQRDSQDASAEQSDHDDEVASLASASGGFGTKVPAPRLPAKDWKTKGSPRTSPKLKRKSKKDDGDAAMGSRLTEHQVAEPPEDWPALIWQQQRELAELRHSQEELLQRLCTQLEGLQSTVTGHVERALETRHEQEQRRLERALAEGQQRGGQLQEQLTQQLSQALSSAVAGRLERSIRDEIKKTVPPCVSRSLEPMAGQLSNSVATKLTAVEGSMKENISKLLKSKNLTDAIARAAADTLQGPMQAAYREAFQSVVLPAFEKSCQAMFQQINDSFRLGTQEYLQQLESHMKSRKAREQEAREPVLAQLRGLVSTLQSATEQMAATVAGSVRAEVQHQLHVAVGSLQESILAQVQRIVKGEVSVALKEQQAAVTSSIMQAMRSAAGTPVPSAHLDCQAQQAHILQLLQQGHLNQAFQQALTAADLNLVLYVCETVDPAQVFGQPPCPLSQPVLLSLIQQLASDLGTRTDLKLSYLEEAVMHLDHSDPITRDHMGSVMAQVRQKLFQFLQAEPHNSLGKAARRLSLMLHGLVTPSLP.

Alanine 2 is subject to N-acetylalanine. Phosphoserine is present on residues serine 3 and serine 6. The tract at residues 23–42 is disordered; it reads DRPAGGPSAESPRPSSAYNG. WD repeat units follow at residues 121–164, 167–206, 217–269, 287–326, 335–385, 389–426, and 432–475; these read QPVA…VISV, SERT…VWRL, ILVH…VWDL, KQGF…FWQI, RCLH…MWCT, TCLQ…LSDV, and YVME…LRHT. Residue lysine 125 is modified to N6-acetyllysine. The tract at residues 545–565 is disordered; sequence TFGESRPELGSEGLGSAAHGS. Residues serine 560, serine 565, serine 583, and serine 585 each carry the phosphoserine modification. Disordered regions lie at residues 603–628 and 662–702; these read ASLQ…SSSS and DGSL…QVPT. Low complexity predominate over residues 609–628; that stretch reads TASPSSSSSGSSSSSSSSSS. Residues 663–675 are compositionally biased toward polar residues; that stretch reads GSLTMSSSGSLQA. Serine 676 carries the post-translational modification Phosphoserine. A compositionally biased stretch (low complexity) spans 677-689; it reads PRGLLPGLLPAPA. Threonine 693 is modified (phosphothreonine). Residues serine 708, serine 723, and serine 725 each carry the phosphoserine modification. Disordered regions lie at residues 717–741 and 778–808; these read LGLP…TALS and LLSP…HNTP. Residues 722 to 741 are compositionally biased toward polar residues; that stretch reads ASPSRTRSPDVISSASTALS. Threonine 727 is modified (phosphothreonine). A phosphoserine mark is found at serine 729 and serine 741. The residue at position 821 (threonine 821) is a Phosphothreonine. Serine 844, serine 871, serine 875, serine 879, serine 887, serine 890, and serine 892 each carry phosphoserine. A disordered region spans residues 868–946; that stretch reads QRDSQDASAE…RLTEHQVAEP (79 aa). Residues 913–934 form a sufficient for nuclear localization region; sequence GSPRTSPKLKRKSKKDDGDAAM. Positions 954–1025 form a coiled coil; it reads IWQQQRELAE…GGQLQEQLTQ (72 aa). 2 positions are modified to phosphoserine: serine 967 and serine 1380.

This sequence belongs to the WD repeat EDC4 family. As to quaternary structure, part of a decapping complex consisting of DCP1A, DCP2, EDC3, EDC4 and probably DDX6. Part of a complex consisting of DCP1A, EDC3, EDC4 and DDX6. Part of a complex consisting of DCP1B, EDC3, EDC4 and DDX6. Interacts with DCP2. Interacts with RC3H1. Interacts with NBDY. Interacts with TEX19. Interacts with LSM14A. Interacts with DDX6. (Microbial infection) Interacts with rotavirus A non-structural protein 2; this interaction probably plays a role in the sequestration of EDC4 in viral factories. Interacts with rotavirus A non-structural protein 5; this interaction probably plays a role in its sequestration in viral factories.

The protein localises to the cytoplasm. It is found in the P-body. Its subcellular location is the nucleus. In terms of biological role, in the process of mRNA degradation, seems to play a role in mRNA decapping. Component of a complex containing DCP2 and DCP1A which functions in decapping of ARE-containing mRNAs. Promotes complex formation between DCP1A and DCP2. Enhances the catalytic activity of DCP2 (in vitro). This chain is Enhancer of mRNA-decapping protein 4 (EDC4), found in Homo sapiens (Human).